Here is an 808-residue protein sequence, read N- to C-terminus: Phenylalanine--tRNA ligase beta subunit (808 aa).

A tRNA-binding domain is found at 40–149 (RPELDFVKIV…DQAEVGKTIR (110 aa)). Positions 407 to 484 (HKEVRIHTDI…RTKGYDTIQV (78 aa)) constitute a B5 domain. Positions 462, 468, 471, and 472 each coordinate Mg(2+). The region spanning 716–808 (SQFPEAEIDL…LAGKNGFVLR (93 aa)) is the FDX-ACB domain.

It belongs to the phenylalanyl-tRNA synthetase beta subunit family. Type 1 subfamily. Tetramer of two alpha and two beta subunits. Mg(2+) serves as cofactor.

The protein localises to the cytoplasm. The enzyme catalyses tRNA(Phe) + L-phenylalanine + ATP = L-phenylalanyl-tRNA(Phe) + AMP + diphosphate + H(+). This Leptospira interrogans serogroup Icterohaemorrhagiae serovar Lai (strain 56601) protein is Phenylalanine--tRNA ligase beta subunit.